Consider the following 199-residue polypeptide: MAVTGPEIERLIALLSKLPGLGPRSARRAVLQLIKKKETLLGPLAAAMTDAMAKARICSACGNVDTQDPCAICADELRDPHILCIVEEVGDLWALERAGAHKGRYHVLGGVLSALDGVGPDDLNIGRLVERLTGGEVREVVLAMNATVDGQTTAHYITDRISGLGISVSRLAHGVPVGGELDYLDDGTLAAAMKSRRPF.

Residues 58–73 (CSACGNVDTQDPCAIC) form a C4-type zinc finger. The Toprim domain maps to 81–176 (HILCIVEEVG…SVSRLAHGVP (96 aa)).

It belongs to the RecR family.

In terms of biological role, may play a role in DNA repair. It seems to be involved in an RecBC-independent recombinational process of DNA repair. It may act with RecF and RecO. This Parvibaculum lavamentivorans (strain DS-1 / DSM 13023 / NCIMB 13966) protein is Recombination protein RecR.